Here is a 615-residue protein sequence, read N- to C-terminus: Proteasome-associated ATPase (615 aa).

Residues M1 to G13 are compositionally biased toward basic and acidic residues. Residues M1–E32 form a disordered region. Positions L22–Q100 form a coiled coil. G302 to L307 contacts ATP. The tract at residues Y614–L615 is docks into pockets in the proteasome alpha-ring.

This sequence belongs to the AAA ATPase family. Homohexamer. Assembles into a hexameric ring structure that caps the 20S proteasome core. Strongly interacts with the prokaryotic ubiquitin-like protein Pup through a hydrophobic interface; the interacting region of ARC lies in its N-terminal coiled-coil domain. There is one Pup binding site per ARC hexamer ring. Upon ATP-binding, the C-terminus of ARC interacts with the alpha-rings of the proteasome core, possibly by binding to the intersubunit pockets.

The protein operates within protein degradation; proteasomal Pup-dependent pathway. ATPase which is responsible for recognizing, binding, unfolding and translocation of pupylated proteins into the bacterial 20S proteasome core particle. May be essential for opening the gate of the 20S proteasome via an interaction with its C-terminus, thereby allowing substrate entry and access to the site of proteolysis. Thus, the C-termini of the proteasomal ATPase may function like a 'key in a lock' to induce gate opening and therefore regulate proteolysis. This Mycobacterium sp. (strain JLS) protein is Proteasome-associated ATPase.